A 324-amino-acid chain; its full sequence is Fibronectin type III domain-containing protein 8 (324 aa).

Residues 179 to 280 form the Fibronectin type-III domain; it reads PDTPFIFEHT…KPYKFATLAT (102 aa).

This chain is Fibronectin type III domain-containing protein 8 (FNDC8), found in Macaca fascicularis (Crab-eating macaque).